The primary structure comprises 185 residues: Neuronal vesicle trafficking-associated protein 1 (185 aa).

Topologically, residues 1 to 82 are cytoplasmic; sequence MVKLGNNFAE…ITEGVTERFK (82 aa). Residues 83–103 form a helical; Signal-anchor for type II membrane protein membrane-spanning segment; that stretch reads VSVLVLFALAFLTCVVFLVVY. The Lumenal portion of the chain corresponds to 104–185; it reads KVYKYDRACP…QETEAAEKSA (82 aa). The required for GRIP1 interaction stretch occupies residues 129 to 164; that stretch reads ESYYTEQDSSAREKFYTVINHYNVAKQSITRSVSPW.

This sequence belongs to the NSG family. In terms of assembly, forms a complex with GRIP1, GRIA2 and STX12 through direct interaction with GRIP1; controls the intracellular fate of AMPAR and the endosomal sorting of the GRIA2 subunit toward recycling and membrane targeting. Interacts with STX12. Interacts with APP; could regulate APP processing. Interacts with FAM171A1. As to expression, pituitary and less in adrenal gland and testis. Expressed in the hippocampus throughout development. At P0, highly and broadly expressed throughout the cortical plate, but is down-regulated overall at P8 and P14, but remains relatively enriched in layer V. At P0 is expressed ubiquitously in the developing cerebellum namely Purkinje neurons as well as granule neurons. However, it becomes restricted to Purkinje cells by P8. This exclusive expression in Purkinje cells is maintained throughout adulthood.

It localises to the membrane. The protein localises to the golgi apparatus. It is found in the trans-Golgi network membrane. Its subcellular location is the endosome membrane. The protein resides in the cell projection. It localises to the dendrite. The protein localises to the early endosome membrane. It is found in the late endosome membrane. Its subcellular location is the lysosome lumen. The protein resides in the recycling endosome membrane. It localises to the cytoplasmic vesicle membrane. The protein localises to the golgi stack membrane. It is found in the endosome. Its subcellular location is the multivesicular body membrane. The protein resides in the endoplasmic reticulum membrane. In terms of biological role, plays a role in the recycling mechanism in neurons of multiple receptors, including AMPAR, APP and L1CAM and acts at the level of early endosomes to promote sorting of receptors toward a recycling pathway. Regulates sorting and recycling of GRIA2 through interaction with GRIP1 and then contributes to the regulation of synaptic transmission and plasticity by affecting the recycling and targeting of AMPA receptors to the synapse. Is required for faithful sorting of L1CAM to axons by facilitating trafficking from somatodendritic early endosome or the recycling endosome. In an other hand, induces apoptosis via the activation of CASP3 in response to DNA damage. This Mus musculus (Mouse) protein is Neuronal vesicle trafficking-associated protein 1.